Here is a 249-residue protein sequence, read N- to C-terminus: Derlin-2.1 (249 aa).

At M1–T21 the chain is on the cytoplasmic side. The chain crosses the membrane as a helical span at residues A22–L42. Residues N43 to F96 lie on the Lumenal side of the membrane. The helical transmembrane segment at F97–I117 threads the bilayer. The Cytoplasmic segment spans residues P118–E122. The chain crosses the membrane as a helical span at residues T123–S143. Topologically, residues K144–S152 are lumenal. A helical transmembrane segment spans residues F153–I173. Over L174–Q249 the chain is Cytoplasmic.

This sequence belongs to the derlin family. As to expression, expressed in roots, stalks, leaves, embryo and endosperm.

Its subcellular location is the endoplasmic reticulum membrane. Functionally, may be involved in the degradation process of specific misfolded endoplasmic reticulum (ER) luminal proteins. This Zea mays (Maize) protein is Derlin-2.1 (DER2.1).